The sequence spans 171 residues: Co-chaperone protein HscB (171 aa).

The J domain occupies 2–74 (DYFTLFGLPA…LTRAEYLLSL (73 aa)).

Belongs to the HscB family. In terms of assembly, interacts with HscA and stimulates its ATPase activity. Interacts with IscU.

In terms of biological role, co-chaperone involved in the maturation of iron-sulfur cluster-containing proteins. Seems to help targeting proteins to be folded toward HscA. This Salmonella typhimurium (strain LT2 / SGSC1412 / ATCC 700720) protein is Co-chaperone protein HscB.